The sequence spans 103 residues: MEACSRKRRRRRAYTTSTTGYAAVFFCGIFVFAQFGISSSALFAPDHYPSLPRKAGHFHEMASFQAPKATVSFTGQRREEENRDEVYKDDKRLVHTGPNPLHN.

Positions 1–21 (MEACSRKRRRRRAYTTSTTGY) are cleaved as a signal peptide. The disordered stretch occupies residues 71 to 103 (VSFTGQRREEENRDEVYKDDKRLVHTGPNPLHN). Residues 76–93 (QRREEENRDEVYKDDKRL) are compositionally biased toward basic and acidic residues. Pro98 bears the Hydroxyproline mark. Pro98 carries an O-linked (Ara...) hydroxyproline glycan.

This sequence belongs to the CLV3/ESR signal peptide family. The O-glycosylation (arabinosylation) of the hydroxyproline Pro-98 enhances binding affinity of the CLE16p peptide for its receptor. As to expression, expressed in roots, stems, apex, seedlings, leaves, flowers and siliques.

The protein resides in the secreted. It is found in the extracellular space. In terms of biological role, extracellular signal peptide that regulates cell fate. Represses root apical meristem maintenance. Regulates the transition of protophloem cells from proliferation to differentiation, thus impinging on postembryonic growth capacity of the root meristem; this signaling pathway requires CRN and CLV2. The chain is CLAVATA3/ESR (CLE)-related protein 16 from Arabidopsis thaliana (Mouse-ear cress).